Reading from the N-terminus, the 358-residue chain is Phospho-N-acetylmuramoyl-pentapeptide-transferase (358 aa).

A run of 10 helical transmembrane segments spans residues 27–47 (LFNN…SLFA), 81–101 (MGGV…TINL), 106–126 (LFLL…DDYL), 147–167 (VISI…PLVI), 171–191 (SWVI…LVGI), 201–221 (LDGL…TEIL), 228–248 (LFVF…FLKY), 255–275 (IFMG…IALL), 278–298 (SVFT…SVII), and 336–356 (IVEN…VLKI).

It belongs to the glycosyltransferase 4 family. MraY subfamily. Mg(2+) serves as cofactor.

It is found in the cell inner membrane. The enzyme catalyses UDP-N-acetyl-alpha-D-muramoyl-L-alanyl-gamma-D-glutamyl-meso-2,6-diaminopimeloyl-D-alanyl-D-alanine + di-trans,octa-cis-undecaprenyl phosphate = di-trans,octa-cis-undecaprenyl diphospho-N-acetyl-alpha-D-muramoyl-L-alanyl-D-glutamyl-meso-2,6-diaminopimeloyl-D-alanyl-D-alanine + UMP. It functions in the pathway cell wall biogenesis; peptidoglycan biosynthesis. Functionally, catalyzes the initial step of the lipid cycle reactions in the biosynthesis of the cell wall peptidoglycan: transfers peptidoglycan precursor phospho-MurNAc-pentapeptide from UDP-MurNAc-pentapeptide onto the lipid carrier undecaprenyl phosphate, yielding undecaprenyl-pyrophosphoryl-MurNAc-pentapeptide, known as lipid I. This chain is Phospho-N-acetylmuramoyl-pentapeptide-transferase, found in Prochlorococcus marinus (strain MIT 9215).